A 137-amino-acid chain; its full sequence is Large ribosomal subunit protein uL16 (137 aa).

The protein belongs to the universal ribosomal protein uL16 family. Part of the 50S ribosomal subunit.

In terms of biological role, binds 23S rRNA and is also seen to make contacts with the A and possibly P site tRNAs. The sequence is that of Large ribosomal subunit protein uL16 from Sinorhizobium medicae (strain WSM419) (Ensifer medicae).